We begin with the raw amino-acid sequence, 191 residues long: Cytochrome b-245 light chain (191 aa).

The Cytoplasmic segment spans residues 2-7; sequence GQIEWA. Residues 8–30 form a helical membrane-spanning segment; that stretch reads MWANEQALASGLILITGGIVATA. Over 31–35 the chain is Extracellular; it reads GQFTQ. Residues 36-53 form a helical membrane-spanning segment; it reads WYLGAYSIAAGVLVCLLE. Topologically, residues 54 to 69 are cytoplasmic; it reads YPRGKRSKGSTMERCG. Residues 70-80 lie within the membrane without spanning it; sequence QKYLTRVVKLF. The Cytoplasmic portion of the chain corresponds to 81-86; sequence GPLTRN. A helical membrane pass occupies residues 87–104; it reads YYIRAFLHLGLAVPAGFL. Residue Leu105 is a topological domain, extracellular. A helical membrane pass occupies residues 106–126; the sequence is ATILGTACLAIASGIYLLAAI. Over 127–191 the chain is Cytoplasmic; it reads RGEQWSPIEP…NPMPVNDEVV (65 aa). Residues 134–191 are disordered; the sequence is IEPKPKERPQIGGTIKQPPSNPPPRPPAEARKKPSEEAAGVPTGGPQENPMPVNDEVV. At Thr147 the chain carries Phosphothreonine. Residue Lys149 forms a Glycyl lysine isopeptide (Lys-Gly) (interchain with G-Cter in ubiquitin) linkage. The residue at position 168 (Ser168) is a Phosphoserine.

The protein belongs to the p22phox family. As to quaternary structure, component of the phagocyte NADPH oxidase core complex/cytochrome b558 complex, composed of CYBB (heavy chain (beta)) and CYBA (light chain (alpha)). Component of the phagocyte NADPH oxidase complex composed of an obligatory core heterodimer formed by the membrane proteins CYBA and CYBB and the cytosolic regulatory subunits NCF1/p47-phox, NCF2/p67-phox, NCF4/p40-phox and the small GTPase RAC1 or RAC2. Interacts with NCF1 (via SH3 domain). Interacts with SH3PXD2A. Interacts with DUOX1, DUOX2 and TPO. Interacts with NOX4; this interaction mediates superoxide generation. Interacts with calprotectin (S100A8/9). Interacts with GBP7. Interacts with NOXO1. Forms a heterodimer with NOX3 and is essential for activity and cell membrane localization of NOX3. Interacts with NOX1. Phosphorylation at Thr-147 enhances NADPH oxidase activity by promoting NCF1/p47-phox binding. In terms of processing, ubiquitinated at Lys-149 likely by RNF145.

It is found in the cell membrane. Its function is as follows. Subunit of NADPH oxidase complexes that is required for the NADPH oxidase activity that generates, in various cell types, superoxide from molecular oxygen utilizing NADPH as an electron donor. Subunit of the phagocyte NADPH oxidase complex that mediates the transfer of electrons from cytosolic NADPH to O2 to produce the superoxide anion (O2(-)). In the activated complex, electrons are first transferred from NADPH to flavin adenine dinucleotide (FAD) and subsequently transferred via two heme molecules to molecular oxygen, producing superoxide through an outer-sphere reaction. Activation of the NADPH oxidase complex is initiated by the assembly of cytosolic subunits of the NADPH oxidase complex with the core NADPH oxidase complex to form a complex at the plasma membrane or phagosomal membrane. This activation process is initiated by phosphorylation dependent binding of the cytosolic NCF1/p47-phox subunit to the C-terminus of CYBA/p22-phox. Aassociates with NOX3 to form a functional NADPH oxidase constitutively generating superoxide. The chain is Cytochrome b-245 light chain from Bos taurus (Bovine).